An 89-amino-acid polypeptide reads, in one-letter code: Small ribosomal subunit protein uS17 (89 aa).

The protein belongs to the universal ribosomal protein uS17 family. Part of the 30S ribosomal subunit.

In terms of biological role, one of the primary rRNA binding proteins, it binds specifically to the 5'-end of 16S ribosomal RNA. The chain is Small ribosomal subunit protein uS17 from Bacteroides fragilis (strain ATCC 25285 / DSM 2151 / CCUG 4856 / JCM 11019 / LMG 10263 / NCTC 9343 / Onslow / VPI 2553 / EN-2).